The chain runs to 146 residues: MIIGIGSDLIDITRIAKVIERHGERFLDRVFTEAERAKAERRAKKSELVAATYAKRFAAKEACSKALGTGIRQGVWWRDMGVVNLPGGRPTMVLTGGAKTRLDALTPPGMTARIDLSITDEWPLAQAFVVISAVQAAAEQAGATSS.

Mg(2+)-binding residues include Asp8 and Glu61.

The protein belongs to the P-Pant transferase superfamily. AcpS family. The cofactor is Mg(2+).

Its subcellular location is the cytoplasm. The enzyme catalyses apo-[ACP] + CoA = holo-[ACP] + adenosine 3',5'-bisphosphate + H(+). In terms of biological role, transfers the 4'-phosphopantetheine moiety from coenzyme A to a Ser of acyl-carrier-protein. This is Holo-[acyl-carrier-protein] synthase from Rhodopseudomonas palustris (strain TIE-1).